Consider the following 528-residue polypeptide: MPSDASTGYVDDQPGDEAYKRGALYKQTKARRADYDSDKEAKRPCTEDSDVALAGTSEEKEARLPKRKVAVMVGYCGTGYHGMQYNPPNRTIEAELFEAFVKAGAISRANSTDLKKNGFMRAARTDKGVHAGGNVISLKLIIEDPAIKDKINEHLPPGIRVWGISRVNKAFDCRKLCGSRWYEYLLPTYSFIGPKPNTYLARTIEQCGEAASEKPDRDQESLDFWEAFRKAVDEKFTQEEQDAIVNYVAPSKEDFDENSGLYQKVKQYKQMENAHRRSYRVSSAKLARFREAMKQYLGPHNFHNYTLGKDFKDPSTVRFMKDITVSDPFVIGEMKTEWVSIKIHGQSFMLHQIRKMISMATLVARCNCSPERIAQSYGPQKINIPKAPALGLLLESPVYEGYNKRLLEFGYEPIDFRNYQKEMDTFKMVHIYDKIYKEEVDENVFNAFFNYIDAFNQVTGAQGEPTKSHDPAKIQLSIIDFLLPCSSSPQENASPEAQKAPETPAGDNTISAEQPKTATEVPTTQSDA.

Residues 1 to 59 (MPSDASTGYVDDQPGDEAYKRGALYKQTKARRADYDSDKEAKRPCTEDSDVALAGTSEE) form a disordered region. Positions 31 to 46 (RRADYDSDKEAKRPCT) are enriched in basic and acidic residues. D126 (nucleophile) is an active-site residue. Polar residues-rich tracts occupy residues 486–495 (SSSPQENASP) and 506–528 (GDNT…QSDA). The disordered stretch occupies residues 486–528 (SSSPQENASPEAQKAPETPAGDNTISAEQPKTATEVPTTQSDA).

It belongs to the tRNA pseudouridine synthase TruA family. Zn(2+) serves as cofactor.

The protein localises to the nucleus. It carries out the reaction a uridine in tRNA = a pseudouridine in tRNA. It catalyses the reaction uridine in snRNA = pseudouridine in snRNA. The enzyme catalyses a uridine in mRNA = a pseudouridine in mRNA. Its function is as follows. Formation of pseudouridine at positions 27 and 28 in the anticodon stem and loop of transfer RNAs; at positions 34 and 36 of intron-containing precursor tRNA(Ile) and at position 35 in the intron-containing tRNA(Tyr). Catalyzes pseudouridylation at position 44 in U2 snRNA. Also catalyzes pseudouridylation of mRNAs. This Eremothecium gossypii (strain ATCC 10895 / CBS 109.51 / FGSC 9923 / NRRL Y-1056) (Yeast) protein is tRNA pseudouridine synthase 1 (PUS1).